Here is a 123-residue protein sequence, read N- to C-terminus: uncharacterized protein (123 aa).

The chain crosses the membrane as a helical span at residues 1–21 (MHIIAKSILLMAVSFLVIIFT).

The protein localises to the membrane. This is an uncharacterized protein from Methanocaldococcus jannaschii (strain ATCC 43067 / DSM 2661 / JAL-1 / JCM 10045 / NBRC 100440) (Methanococcus jannaschii).